Consider the following 212-residue polypeptide: Large ribosomal subunit protein uL3 (212 aa).

Residues 135–156 (MTHGNSRSHRVPGSIGQNQSPG) form a disordered region. Position 153 is an N5-methylglutamine (Gln-153).

It belongs to the universal ribosomal protein uL3 family. In terms of assembly, part of the 50S ribosomal subunit. Forms a cluster with proteins L14 and L19. Post-translationally, methylated by PrmB.

Functionally, one of the primary rRNA binding proteins, it binds directly near the 3'-end of the 23S rRNA, where it nucleates assembly of the 50S subunit. This is Large ribosomal subunit protein uL3 from Tolumonas auensis (strain DSM 9187 / NBRC 110442 / TA 4).